The primary structure comprises 144 residues: Large ribosomal subunit protein uL13 (144 aa).

The protein belongs to the universal ribosomal protein uL13 family. Part of the 50S ribosomal subunit.

Its function is as follows. This protein is one of the early assembly proteins of the 50S ribosomal subunit, although it is not seen to bind rRNA by itself. It is important during the early stages of 50S assembly. The sequence is that of Large ribosomal subunit protein uL13 from Lachnoclostridium phytofermentans (strain ATCC 700394 / DSM 18823 / ISDg) (Clostridium phytofermentans).